The following is a 394-amino-acid chain: Elongation factor Tu (394 aa).

The 195-residue stretch at 10–204 (KEHANIGTIG…AVDDYIPTPE (195 aa)) folds into the tr-type G domain. The G1 stretch occupies residues 19–26 (GHVDHGKT). Position 19 to 26 (19 to 26 (GHVDHGKT)) interacts with GTP. Mg(2+) is bound at residue Thr-26. The segment at 60 to 64 (GITIN) is G2. Residues 81–84 (DCPG) are G3. GTP is bound by residues 81–85 (DCPGH) and 136–139 (NKVD). The interval 136–139 (NKVD) is G4. Positions 174 to 176 (SAL) are G5.

The protein belongs to the TRAFAC class translation factor GTPase superfamily. Classic translation factor GTPase family. EF-Tu/EF-1A subfamily. As to quaternary structure, monomer.

It localises to the cytoplasm. The catalysed reaction is GTP + H2O = GDP + phosphate + H(+). Functionally, GTP hydrolase that promotes the GTP-dependent binding of aminoacyl-tRNA to the A-site of ribosomes during protein biosynthesis. The protein is Elongation factor Tu of Staphylococcus epidermidis (strain ATCC 35984 / DSM 28319 / BCRC 17069 / CCUG 31568 / BM 3577 / RP62A).